The primary structure comprises 553 residues: Arginine--tRNA ligase (553 aa).

The 'HIGH' region signature appears at A130–H140.

The protein belongs to the class-I aminoacyl-tRNA synthetase family. In terms of assembly, monomer.

The protein resides in the cytoplasm. The enzyme catalyses tRNA(Arg) + L-arginine + ATP = L-arginyl-tRNA(Arg) + AMP + diphosphate. The protein is Arginine--tRNA ligase of Staphylococcus aureus (strain USA300 / TCH1516).